We begin with the raw amino-acid sequence, 921 residues long: Isoleucine--tRNA ligase (921 aa).

The 'HIGH' region signature appears at 57–67 (PYANGDIHMGH). Residue E552 coordinates L-isoleucyl-5'-AMP. A 'KMSKS' region motif is present at residues 593–597 (KMSKS). K596 is an ATP binding site. 4 residues coordinate Zn(2+): C888, C891, C908, and C911.

This sequence belongs to the class-I aminoacyl-tRNA synthetase family. IleS type 1 subfamily. Monomer. The cofactor is Zn(2+).

It localises to the cytoplasm. The catalysed reaction is tRNA(Ile) + L-isoleucine + ATP = L-isoleucyl-tRNA(Ile) + AMP + diphosphate. Functionally, catalyzes the attachment of isoleucine to tRNA(Ile). As IleRS can inadvertently accommodate and process structurally similar amino acids such as valine, to avoid such errors it has two additional distinct tRNA(Ile)-dependent editing activities. One activity is designated as 'pretransfer' editing and involves the hydrolysis of activated Val-AMP. The other activity is designated 'posttransfer' editing and involves deacylation of mischarged Val-tRNA(Ile). The polypeptide is Isoleucine--tRNA ligase (Bacillus cereus (strain AH187)).